The primary structure comprises 1060 residues: MNDENRFNVSAVEGESKKNGIHMGANIITRPLRSSVENVERGVAPNSQSEGWHHESGWKRRRSLAQLTREALPRMENYRNSKRALKRPSLGELHGDHLITEEDEKDQNHRDTKSPTPAVGIKLGWIQGVFIPCLLNIWGVMLFLRLSWVVSQAGIGLSLVIIAISAIVCVITTLSMSAICTNGEVKGGGIYYIISRSLGPEFGASVGIIFAFANAVAASMNTIGFCDSLNDLLRSNGLKITEDPINDVRIVGTVALLVMCIICAIGMDWESKAQNFLIAIIVGAMVDFVVGTIMGPKDNSEIAKGFVGLSSATFVENFKSDFRFSEKLDQNFFSVFAIFFPSVTGIQAGANISGDLKDPASAIPKGTLLALLISMVSYTLMVLFAGGGALRDASGNITDLLIVNGTVTDYSSVSLCALNNTCEYGLHNSYSVMQLMSAWGPFIYGGCWAATLSTALTNLLSVPRLIQALGVDRIYPGLIFFSKPYGRHGEPYRGYVLTFFVSLLFLLIADLNTIAPLISNFYLASYALINFCTFHRALVRPLGWRPTFRYYNMWLSLAGFLMCVAIMLLVHWVMSLVTFAIFFTLYLIVHYRRPDVNWGSSTQAQMYKTALSSAHALARTGEHVKNYWPQLLVLAGRPQARPALVDLGNLISKAGSLMIVGDISQEKLSYKVRSARARSDDEWLRGRKVRAFCSRVHGFSFEPGARALVQGSGVGRLAPNVLLMGYKSDWTTCPANDLVSYFNVLHTAFENRLAVAIVRVSGGLDYSAVVSEGAEEGAAGSLTATSSSGELRVRRDGLIMHADSDLDIRDTQPKHNLSNLLTLTTSRSFTISECKEKDKKKKERKPNDMHRQIVYNTASGLELSKFQLAQMSLFQKKQESGTLDVWWLYDDGGLTILLPYIISQRSAWANCKLRIFALANRLHEMELEERNMANLLAKFRIDYSSLTMVQDITDPPQPETKALFDETIKKFTEESASPDCRISDMELQTLAVKTNRQLRLRELLLANSKDARLVVMSLPMPRKGSISAPLYMAWLEMMSRDLPPMLFVRGNHTSVLTFYS.

The Cytoplasmic segment spans residues 1 to 122; sequence MNDENRFNVS…KSPTPAVGIK (122 aa). 2 helical membrane-spanning segments follow: residues 123–143 and 154–174; these read LGWIQGVFIPCLLNIWGVMLF and GIGLSLVIIAISAIVCVITTL. Residues 175 to 197 lie on the Cytoplasmic side of the membrane; the sequence is SMSAICTNGEVKGGGIYYIISRS. 2 helical membrane passes run 198 to 218 and 250 to 270; these read LGPEFGASVGIIFAFANAVAA and IVGTVALLVMCIICAIGMDWE. At 271–275 the chain is on the cytoplasmic side; sequence SKAQN. Helical transmembrane passes span 276–296 and 332–352; these read FLIAIIVGAMVDFVVGTIMGP and FFSVFAIFFPSVTGIQAGANI. Topologically, residues 353–367 are cytoplasmic; the sequence is SGDLKDPASAIPKGT. The chain crosses the membrane as a helical span at residues 368–388; that stretch reads LLALLISMVSYTLMVLFAGGG. Asparagine 396, asparagine 404, and asparagine 419 each carry an N-linked (GlcNAc...) asparagine glycan. The chain crosses the membrane as a helical span at residues 432–452; that stretch reads VMQLMSAWGPFIYGGCWAATL. Residues 453 to 497 lie on the Cytoplasmic side of the membrane; that stretch reads STALTNLLSVPRLIQALGVDRIYPGLIFFSKPYGRHGEPYRGYVL. 2 helical membrane-spanning segments follow: residues 498 to 518 and 563 to 583; these read TFFVSLLFLLIADLNTIAPLI and CVAIMLLVHWVMSLVTFAIFF. Residues 584–642 are Cytoplasmic-facing; sequence TLYLIVHYRRPDVNWGSSTQAQMYKTALSSAHALARTGEHVKNYWPQLLVLAGRPQARP. Residues 643–663 traverse the membrane as a helical segment; the sequence is ALVDLGNLISKAGSLMIVGDI. The N-linked (GlcNAc...) asparagine glycan is linked to asparagine 816. The chain crosses the membrane as a helical span at residues 882 to 902; it reads TLDVWWLYDDGGLTILLPYII. Over 903–1060 the chain is Cytoplasmic; the sequence is SQRSAWANCK…NHTSVLTFYS (158 aa).

This sequence belongs to the SLC12A transporter family.

It localises to the membrane. Its function is as follows. Electrically silent transporter system. Mediates sodium and chloride reabsorption. Plays a vital role in the regulation of ionic balance and cell volume. In Manduca sexta (Tobacco hawkmoth), this protein is Bumetanide-sensitive sodium-(potassium)-chloride cotransporter.